The following is a 101-amino-acid chain: Acylphosphatase (101 aa).

The region spanning 12–98 (RAHVFVTGRV…EGLRGFEVKR (87 aa)) is the Acylphosphatase-like domain. Active-site residues include R27 and N45.

This sequence belongs to the acylphosphatase family.

The catalysed reaction is an acyl phosphate + H2O = a carboxylate + phosphate + H(+). This is Acylphosphatase (acyP) from Nostoc sp. (strain PCC 7120 / SAG 25.82 / UTEX 2576).